We begin with the raw amino-acid sequence, 201 residues long: Small ribosomal subunit protein uS4 (201 aa).

Residues 20–46 (SGTGKELSRRPYAPGQHGQDRRGSLSE) are disordered. In terms of domain architecture, S4 RNA-binding spans 93 to 156 (RRLDNVVYRL…KDLQIVKEAL (64 aa)).

Belongs to the universal ribosomal protein uS4 family. As to quaternary structure, part of the 30S ribosomal subunit. Contacts protein S5. The interaction surface between S4 and S5 is involved in control of translational fidelity.

Functionally, one of the primary rRNA binding proteins, it binds directly to 16S rRNA where it nucleates assembly of the body of the 30S subunit. With S5 and S12 plays an important role in translational accuracy. In Ligilactobacillus salivarius (strain UCC118) (Lactobacillus salivarius), this protein is Small ribosomal subunit protein uS4.